The sequence spans 215 residues: CASP-like protein 1U3 (215 aa).

At 1-13 (MHDEEKKEPKWVT) the chain is on the cytoplasmic side. Residues 14 to 34 (AVSIAGRIAGMGLAVAAAVLM) form a helical membrane-spanning segment. The Extracellular segment spans residues 35–68 (STASQCTVYYAAPAASAYGGAARARTVTYSDFPP). Residues 69-89 (FVFLVGAASIAAFLEAIAIFL) form a helical membrane-spanning segment. Topologically, residues 90–105 (VVWKKGKDKTTKVLMP) are cytoplasmic. Residues 106 to 126 (LLGVAVPALLYSATGAAFAAV) traverse the membrane as a helical segment. The Extracellular portion of the chain corresponds to 127-161 (SDMSYCSANGKRVSICAGSAAAGGGVSGGTNFCSQ). Residues 162-182 (VHIAVYLSLAAAVAVSVAEVV) form a helical membrane-spanning segment. At 183-215 (RGLGGSASGGGSDSDSSSSSESGGCDHGCHHKH) the chain is on the cytoplasmic side. Positions 187–215 (GSASGGGSDSDSSSSSESGGCDHGCHHKH) are disordered. The span at 195–205 (DSDSSSSSESG) shows a compositional bias: low complexity.

This sequence belongs to the Casparian strip membrane proteins (CASP) family. In terms of assembly, homodimer and heterodimers.

The protein resides in the cell membrane. The chain is CASP-like protein 1U3 from Sorghum bicolor (Sorghum).